The following is a 92-amino-acid chain: Phospholemman (92 aa).

The N-terminal stretch at 1–20 (MAYLHHTLLVCMGLLAMANA) is a signal peptide. The Extracellular segment spans residues 22–35 (APQEQDPFTYDYQS). The chain crosses the membrane as a helical span at residues 36–56 (LRIGGLIIAGILFILGILIIL). Residues 57–92 (KRGAWERFDTARRTGEPDEEEGTFRSSIRRLSTRRR) lie on the Cytoplasmic side of the membrane. Residues 67-92 (ARRTGEPDEEEGTFRSSIRRLSTRRR) are disordered. Thr-79 is subject to Phosphothreonine. Ser-82 carries the post-translational modification Phosphoserine. Ser-83 carries the phosphoserine; by PKA and PKC modification. Over residues 83–92 (SIRRLSTRRR) the composition is skewed to basic residues. Phosphoserine; by PKA is present on Ser-88. Thr-89 is subject to Phosphothreonine; by PKC.

It belongs to the FXYD family. In terms of assembly, homotetramer. Monomer. Regulatory subunit of the sodium/potassium-transporting ATPase (NKA) which is composed of a catalytic alpha subunit, a non-catalytic beta subunit and an additional regulatory subunit. The monomeric form associates with NKA while the oligomeric form does not. Interacts with the catalytic alpha-1 subunit ATP1A1. Also interacts with the catalytic alpha-2 and alpha-3 subunits ATP1A2 and ATP1A3. Very little interaction with ATP1A1, ATP1A2 or ATP1A3 when phosphorylated at Ser-83. Interacts with the non-catalytic beta-1 subunit ATP1B1. Oxidative stress decreases interaction with ATP1A1 but increases interaction with ATP1B1. In terms of processing, major plasma membrane substrate for cAMP-dependent protein kinase (PKA) and protein kinase C (PKC) in several different tissues. Phosphorylated in response to insulin and adrenergic stimulation. Phosphorylation at Ser-88 stimulates sodium/potassium-transporting ATPase activity while the unphosphorylated form inhibits sodium/potassium-transporting ATPase activity. Phosphorylation increases tetramerization, decreases binding to ATP1A1 and reduces inhibition of ATP1A1 activity. Phosphorylation at Ser-83 leads to greatly reduced interaction with ATP1A1, ATP1A2 and ATP1A3. May be phosphorylated by DMPK. Post-translationally, palmitoylation increases half-life and stability and is enhanced upon phosphorylation at Ser-88 by PKA. Glutathionylated. Expressed in ventricular myocytes (at protein level).

The protein localises to the cell membrane. It localises to the sarcolemma. It is found in the apical cell membrane. Its subcellular location is the membrane. The protein resides in the caveola. The protein localises to the T-tubule. Functionally, associates with and regulates the activity of the sodium/potassium-transporting ATPase (NKA) which transports Na(+) out of the cell and K(+) into the cell. Inhibits NKA activity in its unphosphorylated state and stimulates activity when phosphorylated. Reduces glutathionylation of the NKA beta-1 subunit ATP1B1, thus reversing glutathionylation-mediated inhibition of ATP1B1. Contributes to female sexual development by maintaining the excitability of neurons which secrete gonadotropin-releasing hormone. This Oryctolagus cuniculus (Rabbit) protein is Phospholemman.